A 1293-amino-acid polypeptide reads, in one-letter code: Late blight resistance protein R1-A (1293 aa).

Coiled-coil stretches lie at residues R423–Q446 and P538–N560. In terms of domain architecture, NB-ARC spans R539–G826. G572 to T579 is an ATP binding site. LRR repeat units lie at residues A876 to H899, F956 to K981, M1027 to N1049, L1056 to N1079, P1102 to P1125, L1149 to N1172, F1175 to A1197, F1198 to I1222, and E1235 to L1259.

This sequence belongs to the disease resistance NB-LRR family.

Its subcellular location is the cytoplasm. The protein localises to the membrane. Functionally, confers resistance to late blight (Phytophthora infestans) races carrying the avirulence gene Avr1. Resistance proteins guard the plant against pathogens that contain an appropriate avirulence protein via an indirect interaction with this avirulence protein. That triggers a defense system including the hypersensitive response, which restricts the pathogen growth. In Solanum demissum (Wild potato), this protein is Late blight resistance protein R1-A (R1A).